Consider the following 635-residue polypeptide: MALSMRKAIGVVKDQTSIGIAKVASNMAPDLEVAIVKATSHDDDQSSDKYIREILSLTSLSRGYVHACVTSVSRRLKKTRDWIVALKALMLVHRLLNEGDPLFQEEILYATRRGTRILNMSDFRDEAHSSSWDHSAFVRTYASYLDQRLELALFERRGRNGGGSSSSHQSNGDDGYNRSRDDFRSPPPRTYDYETGNGFGMPKRSRSFGDVNEIGAREEKKSVTPLREMTPERIFGKMGHLQRLLDRFLSCRPTGLAKNSRMILIAMYPVVKESFRLYADICEVLAVLLDKFFDMEYTDCVKAFDAYASAAKQIDELIAFYHWCKDTGVARSSEYPEVQRITSKLLETLEEFVRDRAKRAKSPERKEIEAPPAPAPPVEEPVDMNEIKALPPPENHTPPPPPAPEPKPQQPQVTDDLVNLREDDVSGDDQGNKFALALFAGPPANNGKWEAFSSDNNVTSAWQNPAAELGKADWELALVETASNLEHQKAAMGGGLDPLLLNGMYDQGAVRQHVSTSELTGGSSSSVALPLPGKVNSHILALPAPDGTVQKVNQDPFAASLTIPPPSYVQMAEMDKKQYLLTQEQQLWQQYQQEGMRGQASLAKMNTAQTAMPYGMPPVNGMGPSPMGYYYNNPY.

Positions 23-159 (VASNMAPDLE…ELALFERRGR (137 aa)) constitute an ENTH domain. A disordered region spans residues 157 to 208 (RGRNGGGSSSSHQSNGDDGYNRSRDDFRSPPPRTYDYETGNGFGMPKRSRSF). Over residues 165 to 174 (SSSHQSNGDD) the composition is skewed to low complexity. Basic and acidic residues predominate over residues 175 to 184 (GYNRSRDDFR). At Ser-207 the chain carries Phosphoserine. Thr-224 is subject to Phosphothreonine. A compositionally biased stretch (basic and acidic residues) spans 357-369 (AKRAKSPERKEIE). The disordered stretch occupies residues 357-412 (AKRAKSPERKEIEAPPAPAPPVEEPVDMNEIKALPPPENHTPPPPPAPEPKPQQPQ). Residues 390-409 (LPPPENHTPPPPPAPEPKPQ) show a composition bias toward pro residues.

Its subcellular location is the membrane. It localises to the clathrin-coated pit. The protein resides in the golgi apparatus. The protein localises to the cytoplasmic vesicle. It is found in the clathrin-coated vesicle. This is Probable clathrin assembly protein At4g32285 from Arabidopsis thaliana (Mouse-ear cress).